A 335-amino-acid chain; its full sequence is Biotin synthase (335 aa).

In terms of domain architecture, Radical SAM core spans Y43–A269. [4Fe-4S] cluster is bound by residues C61, C65, and C68. C104, C137, C197, and R267 together coordinate [2Fe-2S] cluster.

It belongs to the radical SAM superfamily. Biotin synthase family. In terms of assembly, homodimer. The cofactor is [4Fe-4S] cluster. It depends on [2Fe-2S] cluster as a cofactor.

The catalysed reaction is (4R,5S)-dethiobiotin + (sulfur carrier)-SH + 2 reduced [2Fe-2S]-[ferredoxin] + 2 S-adenosyl-L-methionine = (sulfur carrier)-H + biotin + 2 5'-deoxyadenosine + 2 L-methionine + 2 oxidized [2Fe-2S]-[ferredoxin]. The protein operates within cofactor biosynthesis; biotin biosynthesis; biotin from 7,8-diaminononanoate: step 2/2. Catalyzes the conversion of dethiobiotin (DTB) to biotin by the insertion of a sulfur atom into dethiobiotin via a radical-based mechanism. The sequence is that of Biotin synthase from Staphylococcus aureus (strain USA300).